A 487-amino-acid polypeptide reads, in one-letter code: DNA polymerase delta small subunit (487 aa).

Methionine 1 carries the N-acetylmethionine modification. Serine 20 is modified (phosphoserine).

Belongs to the DNA polymerase delta/II small subunit family. As to quaternary structure, DNA polymerase delta is a heterotrimer of POL3, POL32 and HYS2.

It is found in the nucleus. It carries out the reaction DNA(n) + a 2'-deoxyribonucleoside 5'-triphosphate = DNA(n+1) + diphosphate. DNA polymerase delta (DNA polymerase III) participates in chromosomal DNA replication. It is required during synthesis of the leading and lagging DNA strands at the replication fork and binds at/or near replication origins and moves along DNA with the replication fork. It has 3'-5' proofreading exonuclease activity that correct errors arising during DNA replication. It is also involved in DNA synthesis during DNA repair. This Saccharomyces cerevisiae (strain ATCC 204508 / S288c) (Baker's yeast) protein is DNA polymerase delta small subunit (POL31).